Consider the following 475-residue polypeptide: Tubulin epsilon chain (475 aa).

148–154 (GGGTGSG) provides a ligand contact to GTP.

The protein belongs to the tubulin family. In terms of assembly, found in a complex with TEDC1, TEDC2, TUBE1 and TUBD1.

It is found in the cytoplasm. It localises to the cytoskeleton. The protein localises to the microtubule organizing center. The protein resides in the centrosome. The polypeptide is Tubulin epsilon chain (TUBE1) (Homo sapiens (Human)).